A 512-amino-acid chain; its full sequence is 2,3-bisphosphoglycerate-independent phosphoglycerate mutase (512 aa).

Mn(2+) is bound by residues Asp12 and Ser62. The Phosphoserine intermediate role is filled by Ser62. Residues His123, 153–154 (RD), Arg185, Arg191, 260–263 (RPDR), and Lys333 contribute to the substrate site. Mn(2+) is bound by residues Asp400, His404, Asp441, His442, and His460.

The protein belongs to the BPG-independent phosphoglycerate mutase family. Monomer. Mn(2+) serves as cofactor.

The catalysed reaction is (2R)-2-phosphoglycerate = (2R)-3-phosphoglycerate. It functions in the pathway carbohydrate degradation; glycolysis; pyruvate from D-glyceraldehyde 3-phosphate: step 3/5. Functionally, catalyzes the interconversion of 2-phosphoglycerate and 3-phosphoglycerate. The protein is 2,3-bisphosphoglycerate-independent phosphoglycerate mutase of Clostridium perfringens (strain 13 / Type A).